Here is a 547-residue protein sequence, read N- to C-terminus: Chaperonin GroEL (547 aa).

ATP contacts are provided by residues 30–33 (TLGP), K51, 87–91 (DGTTT), G415, 479–481 (NAA), and D495.

It belongs to the chaperonin (HSP60) family. Forms a cylinder of 14 subunits composed of two heptameric rings stacked back-to-back. Interacts with the co-chaperonin GroES.

It is found in the cytoplasm. It carries out the reaction ATP + H2O + a folded polypeptide = ADP + phosphate + an unfolded polypeptide.. Functionally, together with its co-chaperonin GroES, plays an essential role in assisting protein folding. The GroEL-GroES system forms a nano-cage that allows encapsulation of the non-native substrate proteins and provides a physical environment optimized to promote and accelerate protein folding. In Cupriavidus taiwanensis (strain DSM 17343 / BCRC 17206 / CCUG 44338 / CIP 107171 / LMG 19424 / R1) (Ralstonia taiwanensis (strain LMG 19424)), this protein is Chaperonin GroEL.